Consider the following 772-residue polypeptide: MNRLRNAKIYVERAVKQKKIFTIQGCYPVIRCLLRRRGWVEKKMVHRSGPTLLPPQKDLDSSAMGDSDTTEDEDEDEDEEFQPSQLFDFDDLLKFDDLDGTHALMVGLCLNLRNLPWFDEVDANSFFPRCYCLGAEDDKKAFIEDFWLTAARNVLKLVVKSEWKSYPIQAVEEEASGDKQPKKQEKNPVLVSPEFVDEALCACEEYLSNLAHMDIDKDLEAPLYLTPEGWSLFLQRYYQVVHEGAELRHLDTQVQRCEDILQQLQAVVPQIDMEGDRNIWIVKPGAKSRGRGIMCMDHLEEMLKLVNGNPVVMKDGKWVVQKYIERPLLIFGTKFDLRQWFLVTDWNPLTVWFYRDSYIRFSTQPFSLKNLDNSVHLCNNSIQKHLENSCHRHPLLPPDNMWSSQRFQAHLQEMGAPNAWSTIIVPGMKDAVIHALQTSQDTVQCRKASFELYGADFVFGEDFQPWLIEINASPTMAPSTAVTARLCAGVQADTLRVVIDRMLDRNCDTGAFELIYKQPAVEVPQYVGIRLLVEGFTIKKPMAMCHRRMGVRPAVPLLTQRGSGEARHHFPSLHTKAQLPSPHVLRHQGQVLRRQHSKLVGTKALSTTGKALRTLPTAKVFISLPPNLDFKVAPSILKPRKAPALLCLRGPQLEVPCCLCPLKSEQFLAPVGRSRPKANSRPDCDKPRAEACPMKRLSPLKPLPLVGTFQRRRGLGDMKLGKPLLRFPTALVLDPTPNKKKQVKYLGLDSIAVGGSRVDGARPCTPGSTARA.

Positions 50 to 81 are disordered; that stretch reads PTLLPPQKDLDSSAMGDSDTTEDEDEDEDEEF. Residues 68 to 81 are compositionally biased toward acidic residues; the sequence is DTTEDEDEDEDEEF. Residues 151–510 enclose the TTL domain; it reads ARNVLKLVVK…RMLDRNCDTG (360 aa). Residues lysine 283, 289-290, 321-324, 334-336, and 378-379 contribute to the ATP site; these read RG, QKYI, KFD, and CN. Arginine 289 provides a ligand contact to a protein. L-glutamate is bound at residue serine 381. Residues aspartate 456, glutamate 469, and asparagine 471 each coordinate Mg(2+). An ATP-binding site is contributed by glutamate 469.

It depends on Mg(2+) as a cofactor. In terms of tissue distribution, expressed in brain, heart, kidney, testis, liver, lung, muscle, spleen, trachea and colon.

The protein localises to the cytoplasm. Its subcellular location is the cytoskeleton. It localises to the cell projection. It is found in the cilium. The protein resides in the cilium axoneme. The protein localises to the flagellum axoneme. It catalyses the reaction L-glutamyl-[protein] + glycine + ATP = glycyl-L-glutamyl-[protein] + ADP + phosphate + H(+). Functionally, monoglycylase which modifies alpha- and beta-tubulin, adding a single glycine on the gamma-carboxyl groups of specific glutamate residues to generate monoglycine side chains within the C-terminal tail of tubulin. Not involved in elongation step of the polyglycylation reaction. Preferentially glycylates a beta-tail peptide over the alpha-tail, although shifts its preference toward alpha-tail as beta-tail glutamylation increases. Competes with polyglutamylases for modification site on beta-tubulin substrate, thereby creating an anticorrelation between glycylation and glutamylation reactions. Together with TTLL8, mediates microtubule glycylation of primary and motile cilia, which is essential for their stability and maintenance. Involved in microtubule glycylation of primary cilia in colon which controls cell proliferation of epithelial cells and plays an essential role in colon cancer development. Together with TTLL8, glycylates sperm flagella which regulates axonemal dynein motor activity, thereby controlling flagellar beat, directional sperm swimming and male fertility. The chain is Tubulin monoglycylase TTLL3 from Homo sapiens (Human).